A 221-amino-acid polypeptide reads, in one-letter code: N-(5'-phosphoribosyl)anthranilate isomerase (221 aa).

The protein belongs to the TrpF family.

The catalysed reaction is N-(5-phospho-beta-D-ribosyl)anthranilate = 1-(2-carboxyphenylamino)-1-deoxy-D-ribulose 5-phosphate. Its pathway is amino-acid biosynthesis; L-tryptophan biosynthesis; L-tryptophan from chorismate: step 3/5. This is N-(5'-phosphoribosyl)anthranilate isomerase from Geobacillus thermodenitrificans (strain NG80-2).